Consider the following 612-residue polypeptide: uncharacterized protein (612 aa).

Disordered regions lie at residues 46–113 (QQPQ…MVTP), 129–185 (QQYQ…TPTY), 313–360 (TKDG…GSTM), 457–488 (FSISGGGGSGGIPSQSGIIKKHKKPSGSSGYG), and 593–612 (NNTNNTNNTNNTNNNTVVTI). Over residues 58–102 (HQQIPISTQSTPNSTSSTTTTTTTTTSTTTAPTSNSKKSKTTPSN) the composition is skewed to low complexity. Composition is skewed to polar residues over residues 103-113 (GNKPTSGMVTP) and 129-138 (QQYQPNSQLQ). Low complexity predominate over residues 143 to 169 (IIKKSSLSTTPNNINNNNNNNNNTNTI). The span at 175 to 185 (GGNNSAPTPTY) shows a compositional bias: polar residues. A compositionally biased stretch (low complexity) spans 323 to 359 (TTSSTSTSSSATSTTSSSTSSTTTTSSTSNSSTPGST).

This is an uncharacterized protein from Dictyostelium discoideum (Social amoeba).